The primary structure comprises 315 residues: Leucine-rich repeat-containing protein 75B (315 aa).

The segment at Met1–Cys23 is disordered. Over residues Pro11–Cys23 the composition is skewed to low complexity. LRR repeat units lie at residues Leu182 to Glu195 and Leu207 to Leu220. Residues Pro284–Arg315 form a disordered region. The segment covering Gly286–Thr297 has biased composition (low complexity).

This sequence belongs to the LRRC75 family.

Functionally, may suppress myogenic differentiation by modulating MYOG expression and Erk1/2 signaling. This chain is Leucine-rich repeat-containing protein 75B, found in Homo sapiens (Human).